The primary structure comprises 397 residues: uncharacterized protein (397 aa).

10 helical membrane passes run Leu2–His24, Tyr44–Leu66, Ala92–Leu114, Ala124–Tyr143, Ser150–Tyr169, Ala173–Leu195, Phe255–Ile277, Ile297–Ser319, Phe331–Ser350, and Tyr354–Val373.

The protein resides in the cell membrane. This is an uncharacterized protein from Methanocaldococcus jannaschii (strain ATCC 43067 / DSM 2661 / JAL-1 / JCM 10045 / NBRC 100440) (Methanococcus jannaschii).